The sequence spans 364 residues: DNA replication and repair protein RecF (364 aa).

Glycine 30 to threonine 37 contacts ATP.

This sequence belongs to the RecF family.

It is found in the cytoplasm. In terms of biological role, the RecF protein is involved in DNA metabolism; it is required for DNA replication and normal SOS inducibility. RecF binds preferentially to single-stranded, linear DNA. It also seems to bind ATP. In Stenotrophomonas maltophilia (strain K279a), this protein is DNA replication and repair protein RecF.